The chain runs to 283 residues: 2-dehydro-3-deoxyphosphooctonate aldolase (283 aa).

The protein belongs to the KdsA family.

Its subcellular location is the cytoplasm. It carries out the reaction D-arabinose 5-phosphate + phosphoenolpyruvate + H2O = 3-deoxy-alpha-D-manno-2-octulosonate-8-phosphate + phosphate. It functions in the pathway carbohydrate biosynthesis; 3-deoxy-D-manno-octulosonate biosynthesis; 3-deoxy-D-manno-octulosonate from D-ribulose 5-phosphate: step 2/3. Its pathway is bacterial outer membrane biogenesis; lipopolysaccharide biosynthesis. The sequence is that of 2-dehydro-3-deoxyphosphooctonate aldolase from Synechococcus sp. (strain WH7803).